We begin with the raw amino-acid sequence, 550 residues long: Chaperonin GroEL (550 aa).

Residues 30–33 (TLGP), Lys-51, 87–91 (DGTTT), Gly-415, 481–483 (NAA), and Asp-497 contribute to the ATP site.

This sequence belongs to the chaperonin (HSP60) family. In terms of assembly, forms a cylinder of 14 subunits composed of two heptameric rings stacked back-to-back. Interacts with the co-chaperonin GroES.

It localises to the cytoplasm. The catalysed reaction is ATP + H2O + a folded polypeptide = ADP + phosphate + an unfolded polypeptide.. Functionally, together with its co-chaperonin GroES, plays an essential role in assisting protein folding. The GroEL-GroES system forms a nano-cage that allows encapsulation of the non-native substrate proteins and provides a physical environment optimized to promote and accelerate protein folding. The sequence is that of Chaperonin GroEL from Photobacterium profundum (strain SS9).